Consider the following 243-residue polypeptide: Adenosine 5'-phosphosulfate reductase (243 aa).

The protein belongs to the PAPS reductase family. CysH subfamily. [4Fe-4S] cluster is required as a cofactor.

It localises to the cytoplasm. The enzyme catalyses [thioredoxin]-disulfide + sulfite + AMP + 2 H(+) = adenosine 5'-phosphosulfate + [thioredoxin]-dithiol. Its pathway is sulfur metabolism; hydrogen sulfide biosynthesis; sulfite from sulfate. In terms of biological role, catalyzes the formation of sulfite from adenosine 5'-phosphosulfate (APS) using thioredoxin as an electron donor. This Staphylococcus haemolyticus (strain JCSC1435) protein is Adenosine 5'-phosphosulfate reductase.